A 346-amino-acid polypeptide reads, in one-letter code: UDP-3-O-acylglucosamine N-acyltransferase (346 aa).

The Proton acceptor role is filled by His253.

The protein belongs to the transferase hexapeptide repeat family. LpxD subfamily. As to quaternary structure, homotrimer.

It catalyses the reaction a UDP-3-O-[(3R)-3-hydroxyacyl]-alpha-D-glucosamine + a (3R)-hydroxyacyl-[ACP] = a UDP-2-N,3-O-bis[(3R)-3-hydroxyacyl]-alpha-D-glucosamine + holo-[ACP] + H(+). It participates in bacterial outer membrane biogenesis; LPS lipid A biosynthesis. In terms of biological role, catalyzes the N-acylation of UDP-3-O-acylglucosamine using 3-hydroxyacyl-ACP as the acyl donor. Is involved in the biosynthesis of lipid A, a phosphorylated glycolipid that anchors the lipopolysaccharide to the outer membrane of the cell. The sequence is that of UDP-3-O-acylglucosamine N-acyltransferase from Rickettsia akari (strain Hartford).